A 420-amino-acid polypeptide reads, in one-letter code: Tubulin epsilon and delta complex protein 1 (420 aa).

Residues 276–340 (SEGGLGELES…AVQQELAALQ (65 aa)) adopt a coiled-coil conformation. The segment covering 342 to 351 (SWEQSSTPGQ) has biased composition (polar residues). The interval 342–369 (SWEQSSTPGQPQRPHRLVRSKDGAPRPQ) is disordered. Residues 377-409 (IRTLSAKEACLKKALHQLQRQCQQELARLAGAL) are a coiled coil.

Interacts with TEDC2. Found in a complex with TEDC1, TEDC2, TUBE1 and TUBD1.

It is found in the cell projection. The protein resides in the cilium. The protein localises to the cytoplasm. Its subcellular location is the cytoskeleton. It localises to the microtubule organizing center. It is found in the centrosome. The protein resides in the centriole. Functionally, acts as a positive regulator of ciliary hedgehog signaling. Required for centriole stability. May play a role in counteracting perturbation of actin filaments, such as after treatment with the actin depolymerizing microbial metabolite Chivosazole F. The polypeptide is Tubulin epsilon and delta complex protein 1 (Mus musculus (Mouse)).